We begin with the raw amino-acid sequence, 505 residues long: ATP synthase subunit alpha (505 aa).

171-178 (GDRQTGKT) is an ATP binding site.

The protein belongs to the ATPase alpha/beta chains family. In terms of assembly, F-type ATPases have 2 components, CF(1) - the catalytic core - and CF(0) - the membrane proton channel. CF(1) has five subunits: alpha(3), beta(3), gamma(1), delta(1), epsilon(1). CF(0) has three main subunits: a(1), b(2) and c(9-12). The alpha and beta chains form an alternating ring which encloses part of the gamma chain. CF(1) is attached to CF(0) by a central stalk formed by the gamma and epsilon chains, while a peripheral stalk is formed by the delta and b chains.

Its subcellular location is the cell inner membrane. The catalysed reaction is ATP + H2O + 4 H(+)(in) = ADP + phosphate + 5 H(+)(out). In terms of biological role, produces ATP from ADP in the presence of a proton gradient across the membrane. The alpha chain is a regulatory subunit. The sequence is that of ATP synthase subunit alpha from Campylobacter concisus (strain 13826).